The primary structure comprises 104 residues: Putative pterin-4-alpha-carbinolamine dehydratase (104 aa).

It belongs to the pterin-4-alpha-carbinolamine dehydratase family.

It catalyses the reaction (4aS,6R)-4a-hydroxy-L-erythro-5,6,7,8-tetrahydrobiopterin = (6R)-L-erythro-6,7-dihydrobiopterin + H2O. This chain is Putative pterin-4-alpha-carbinolamine dehydratase (pcbD), found in Rhizobium meliloti (strain 1021) (Ensifer meliloti).